Here is a 286-residue protein sequence, read N- to C-terminus: 4-hydroxybenzoate octaprenyltransferase (286 aa).

Helical transmembrane passes span 22–42 (IGTL…EKAM), 45–65 (LSVL…GCVI), 98–118 (LFIV…LYTI), 143–163 (FFLG…TIEA), 213–233 (IIAL…YLSQ), 238–255 (YFIV…QCRL), and 266–286 (NAFL…LFGI).

This sequence belongs to the UbiA prenyltransferase family. The cofactor is Mg(2+).

The protein localises to the cell inner membrane. It catalyses the reaction all-trans-octaprenyl diphosphate + 4-hydroxybenzoate = 4-hydroxy-3-(all-trans-octaprenyl)benzoate + diphosphate. It functions in the pathway cofactor biosynthesis; ubiquinone biosynthesis. In terms of biological role, catalyzes the prenylation of para-hydroxybenzoate (PHB) with an all-trans polyprenyl group. Mediates the second step in the final reaction sequence of ubiquinone-8 (UQ-8) biosynthesis, which is the condensation of the polyisoprenoid side chain with PHB, generating the first membrane-bound Q intermediate 3-octaprenyl-4-hydroxybenzoate. The sequence is that of 4-hydroxybenzoate octaprenyltransferase from Histophilus somni (strain 129Pt) (Haemophilus somnus).